Consider the following 117-residue polypeptide: Alpha-endosulfine (117 aa).

The disordered stretch occupies residues 1–53; the sequence is MAAPLGTGARAEDSGQEKQDSQEKETVIPERAEEAKLKAKYPNLGQKPGGSDF. Positions 10–37 are enriched in basic and acidic residues; the sequence is RAEDSGQEKQDSQEKETVIPERAEEAKL. Residue S67 is modified to Phosphoserine; by GWL. The segment at 76–117 is disordered; the sequence is KMKNKQLPTAGPDKNLVTGDHIPKPQDLPQRKSSLVASKLAG.

This sequence belongs to the endosulfine family. Post-translationally, phosphorylation at Ser-67 by GWL during mitosis is essential for interaction with PPP2R2D (PR55-delta) and subsequent inactivation of PP2A.

The protein localises to the cytoplasm. Its function is as follows. Protein phosphatase inhibitor that specifically inhibits protein phosphatase 2A (PP2A) during mitosis. When phosphorylated at Ser-67 during mitosis, specifically interacts with PPP2R2D (PR55-delta) and inhibits its activity, leading to inactivation of PP2A, an essential condition to keep cyclin-B1-CDK1 activity high during M phase. The polypeptide is Alpha-endosulfine (ENSA) (Gallus gallus (Chicken)).